A 31-amino-acid chain; its full sequence is Cytochrome b6-f complex subunit 6 (31 aa).

Residues I4–G24 form a helical membrane-spanning segment.

This sequence belongs to the PetL family. In terms of assembly, the 4 large subunits of the cytochrome b6-f complex are cytochrome b6, subunit IV (17 kDa polypeptide, PetD), cytochrome f and the Rieske protein, while the 4 small subunits are PetG, PetL, PetM and PetN. The complex functions as a dimer.

The protein localises to the plastid. It is found in the chloroplast thylakoid membrane. Component of the cytochrome b6-f complex, which mediates electron transfer between photosystem II (PSII) and photosystem I (PSI), cyclic electron flow around PSI, and state transitions. PetL is important for photoautotrophic growth as well as for electron transfer efficiency and stability of the cytochrome b6-f complex. The polypeptide is Cytochrome b6-f complex subunit 6 (Phaseolus vulgaris (Kidney bean)).